The primary structure comprises 392 residues: Probable tRNA sulfurtransferase (392 aa).

In terms of domain architecture, THUMP spans 60–162 (QQVINDLQQV…HDCAIVYGHK (103 aa)). ATP contacts are provided by residues 180–181 (LL), 205–206 (TF), R264, G286, and Q295.

The protein belongs to the ThiI family.

The protein resides in the cytoplasm. It catalyses the reaction [ThiI sulfur-carrier protein]-S-sulfanyl-L-cysteine + a uridine in tRNA + 2 reduced [2Fe-2S]-[ferredoxin] + ATP + H(+) = [ThiI sulfur-carrier protein]-L-cysteine + a 4-thiouridine in tRNA + 2 oxidized [2Fe-2S]-[ferredoxin] + AMP + diphosphate. The enzyme catalyses [ThiS sulfur-carrier protein]-C-terminal Gly-Gly-AMP + S-sulfanyl-L-cysteinyl-[cysteine desulfurase] + AH2 = [ThiS sulfur-carrier protein]-C-terminal-Gly-aminoethanethioate + L-cysteinyl-[cysteine desulfurase] + A + AMP + 2 H(+). The protein operates within cofactor biosynthesis; thiamine diphosphate biosynthesis. Catalyzes the ATP-dependent transfer of a sulfur to tRNA to produce 4-thiouridine in position 8 of tRNAs, which functions as a near-UV photosensor. Also catalyzes the transfer of sulfur to the sulfur carrier protein ThiS, forming ThiS-thiocarboxylate. This is a step in the synthesis of thiazole, in the thiamine biosynthesis pathway. The sulfur is donated as persulfide by IscS. This Ureaplasma urealyticum serovar 10 (strain ATCC 33699 / Western) protein is Probable tRNA sulfurtransferase.